The chain runs to 50 residues: MAREGFTLECTSCKMQNYISKKNKKLHPEKVKLSKYCSKCSKHSVHKERK.

The protein belongs to the bacterial ribosomal protein bL33 family.

In Mycoplasmopsis synoviae (strain 53) (Mycoplasma synoviae), this protein is Large ribosomal subunit protein bL33.